The following is a 311-amino-acid chain: Ceroid-lipofuscinosis neuronal protein 6 (311 aa).

7 helical membrane-spanning segments follow: residues 56–76 (WVLD…WFPL), 81–101 (VGDY…LKLI), 111–131 (SITY…LVGD), 179–199 (CMWY…CFTA), 204–224 (SLIP…YWYL), 225–245 (VTEG…LALV), and 260–280 (LFLF…VAWL).

In terms of assembly, interacts with CRMP2. Interacts with CLN5. Interacts with CLN3.

Its subcellular location is the endoplasmic reticulum membrane. It is found in the endoplasmic reticulum. This Homo sapiens (Human) protein is Ceroid-lipofuscinosis neuronal protein 6 (CLN6).